The chain runs to 446 residues: Sorting nexin-30 (446 aa).

The span at 1-18 (MSGSSTPKSLPTSGQQSL) shows a compositional bias: polar residues. Residues 1-84 (MSGSSTPKSL…SSPASSSSLL (84 aa)) are disordered. Positions 70-84 (TPADTSSPASSSSLL) are enriched in low complexity. Residues 98 to 219 (RDLFVTVDDP…VFLTAKDLNS (122 aa)) form the PX domain. A 1,2-diacyl-sn-glycero-3-phospho-(1D-myo-inositol-3-phosphate) is bound by residues arginine 141, glutamine 143, lysine 171, and arginine 185. The 204-residue stretch at 243-446 (KLRNRPVEFA…PLLQDKQEPK (204 aa)) folds into the BAR domain.

It belongs to the sorting nexin family.

The protein resides in the early endosome membrane. Its function is as follows. Involved in the regulation of endocytosis and in several stages of intracellular trafficking. Together with snx4, involved in autophagosome assembly. This chain is Sorting nexin-30 (snx30), found in Xenopus tropicalis (Western clawed frog).